The following is a 1077-amino-acid chain: Insulin receptor substrate 2-B (1077 aa).

The tract at residues 1 to 66 (MAGVLCPTEE…APASTAEDDV (66 aa)) is disordered. Short sequence motifs (YXXM motif) lie at residues 33–36 (YRRM) and 147–150 (YFAM). Residues 65 to 170 (DVRKRGYLRK…WYQALSELIN (106 aa)) enclose the PH domain. Positions 195 to 299 (FKEVWQVNVK…DTMKALKAYS (105 aa)) constitute an IRS-type PTB domain. 3 disordered regions span residues 342–373 (ETVVGTPPSAKNNSFRFRTSSEGEGTMTRPFR), 428–464 (VCSSNGHGSASETLTRPSSSSVCGSPSDGGFISSDEY), and 476–495 (VRSNTPDSLGNTPPIQEENT). Composition is skewed to polar residues over residues 350–364 (SAKNNSFRFRTSSEG) and 428–444 (VCSSNGHGSASETLTRP). Residues 445-457 (SSSSVCGSPSDGG) are compositionally biased toward low complexity. A compositionally biased stretch (polar residues) spans 477-495 (RSNTPDSLGNTPPIQEENT). A YXXM motif 3 motif is present at residues 499–502 (YMSM). Residues 530–544 (KPTNAASQQKSQTAV) show a composition bias toward polar residues. Positions 530–571 (KPTNAASQQKSQTAVSLDEDSEETNKQFAYAESPKLKDSSHV) are disordered. Short sequence motifs (YXXM motif) lie at residues 595 to 598 (YMPM), 608 to 611 (YLPM), 634 to 637 (YMMM), 666 to 669 (YMDM), 713 to 716 (YVPM), and 891 to 894 (YTTM).

Phosphorylated by INSR.

In terms of biological role, potentiates insulin signaling. In Xenopus laevis (African clawed frog), this protein is Insulin receptor substrate 2-B (irs2-b).